Here is a 587-residue protein sequence, read N- to C-terminus: Glutamine--tRNA ligase (587 aa).

A 'HIGH' region motif is present at residues 58–68 (PEPNGYLHIGH). Residues 59-61 (EPN) and 65-71 (HIGHAKS) contribute to the ATP site. L-glutamine is bound by residues Asp91 and Tyr240. ATP-binding positions include Thr259 and 294 to 295 (RL). The 'KMSKS' region motif lies at 301–305 (VTSKR).

Belongs to the class-I aminoacyl-tRNA synthetase family. Monomer.

Its subcellular location is the cytoplasm. The enzyme catalyses tRNA(Gln) + L-glutamine + ATP = L-glutaminyl-tRNA(Gln) + AMP + diphosphate. This chain is Glutamine--tRNA ligase, found in Bordetella bronchiseptica (strain ATCC BAA-588 / NCTC 13252 / RB50) (Alcaligenes bronchisepticus).